A 338-amino-acid chain; its full sequence is MTEEERLLSAASQEAEASIEKSLRPQFLAQYIGQDKVKQELTIYIEAAKNRNEALDHTLLYGPPGLGKTTMAMVIANEMNVNIRTTSGPAIERAGDLVAILNELEPGDVLFIDEIHRLPRVVEEMLYSAMEDFYIDIMVGQGTTAHPVHFPLPPFTLVGATTRAGMLSAPLRDRFGIISHMEYYQEQDLKEIVLRSADIFQTEIFEEGAFEIARRSRGTPRIANRLLKRVRDFAQVQSDGKIDRAIADKALTLLQVDHQGLDYVDQKLLKTMIDLYGGGPVGLSTLSVNIGEETETVEDMYEPYLIQKGFIKRTPRGRIATPFAYAHFGYDYLEGRKN.

Residues 1–184 (MTEEERLLSA…FGIISHMEYY (184 aa)) form a large ATPase domain (RuvB-L) region. Residues leucine 23, arginine 24, glycine 65, lysine 68, threonine 69, threonine 70, 131-133 (EDF), arginine 174, tyrosine 184, and arginine 221 contribute to the ATP site. Position 69 (threonine 69) interacts with Mg(2+). Residues 185-255 (QEQDLKEIVL…IADKALTLLQ (71 aa)) are small ATPAse domain (RuvB-S). The head domain (RuvB-H) stretch occupies residues 258–338 (HQGLDYVDQK…GYDYLEGRKN (81 aa)). DNA is bound by residues arginine 313 and arginine 318.

Belongs to the RuvB family. As to quaternary structure, homohexamer. Forms an RuvA(8)-RuvB(12)-Holliday junction (HJ) complex. HJ DNA is sandwiched between 2 RuvA tetramers; dsDNA enters through RuvA and exits via RuvB. An RuvB hexamer assembles on each DNA strand where it exits the tetramer. Each RuvB hexamer is contacted by two RuvA subunits (via domain III) on 2 adjacent RuvB subunits; this complex drives branch migration. In the full resolvosome a probable DNA-RuvA(4)-RuvB(12)-RuvC(2) complex forms which resolves the HJ.

The protein localises to the cytoplasm. It catalyses the reaction ATP + H2O = ADP + phosphate + H(+). Functionally, the RuvA-RuvB-RuvC complex processes Holliday junction (HJ) DNA during genetic recombination and DNA repair, while the RuvA-RuvB complex plays an important role in the rescue of blocked DNA replication forks via replication fork reversal (RFR). RuvA specifically binds to HJ cruciform DNA, conferring on it an open structure. The RuvB hexamer acts as an ATP-dependent pump, pulling dsDNA into and through the RuvAB complex. RuvB forms 2 homohexamers on either side of HJ DNA bound by 1 or 2 RuvA tetramers; 4 subunits per hexamer contact DNA at a time. Coordinated motions by a converter formed by DNA-disengaged RuvB subunits stimulates ATP hydrolysis and nucleotide exchange. Immobilization of the converter enables RuvB to convert the ATP-contained energy into a lever motion, pulling 2 nucleotides of DNA out of the RuvA tetramer per ATP hydrolyzed, thus driving DNA branch migration. The RuvB motors rotate together with the DNA substrate, which together with the progressing nucleotide cycle form the mechanistic basis for DNA recombination by continuous HJ branch migration. Branch migration allows RuvC to scan DNA until it finds its consensus sequence, where it cleaves and resolves cruciform DNA. This Enterococcus faecalis (strain ATCC 700802 / V583) protein is Holliday junction branch migration complex subunit RuvB.